Consider the following 309-residue polypeptide: ATP synthase gamma chain (309 aa).

This sequence belongs to the ATPase gamma chain family. F-type ATPases have 2 components, CF(1) - the catalytic core - and CF(0) - the membrane proton channel. CF(1) has five subunits: alpha(3), beta(3), gamma(1), delta(1), epsilon(1). CF(0) has three main subunits: a, b and c.

Its subcellular location is the cell membrane. Its function is as follows. Produces ATP from ADP in the presence of a proton gradient across the membrane. The gamma chain is believed to be important in regulating ATPase activity and the flow of protons through the CF(0) complex. The polypeptide is ATP synthase gamma chain (Mycolicibacterium gilvum (strain PYR-GCK) (Mycobacterium gilvum (strain PYR-GCK))).